Consider the following 145-residue polypeptide: Peptide methionine sulfoxide reductase MsrB (145 aa).

In terms of domain architecture, MsrB spans 4 to 127 (SDELKQRIGD…NSAALKFIPY (124 aa)). Residue Cys-116 is the Nucleophile of the active site.

Belongs to the MsrB Met sulfoxide reductase family.

It catalyses the reaction L-methionyl-[protein] + [thioredoxin]-disulfide + H2O = L-methionyl-(R)-S-oxide-[protein] + [thioredoxin]-dithiol. The sequence is that of Peptide methionine sulfoxide reductase MsrB from Streptococcus pyogenes serotype M1.